Consider the following 305-residue polypeptide: Ornithine carbamoyltransferase, catabolic (305 aa).

Residues 50–53 (STRT), Gln-77, Arg-101, and 128–131 (HPLQ) contribute to the carbamoyl phosphate site. Residues Asn-159, Asp-223, and 227–228 (SM) contribute to the L-ornithine site. Residues 263-264 (CL) and Arg-291 contribute to the carbamoyl phosphate site.

It belongs to the aspartate/ornithine carbamoyltransferase superfamily. OTCase family.

Its subcellular location is the cytoplasm. The catalysed reaction is carbamoyl phosphate + L-ornithine = L-citrulline + phosphate + H(+). Its pathway is amino-acid degradation; L-arginine degradation via ADI pathway; carbamoyl phosphate from L-arginine: step 2/2. Functionally, reversibly catalyzes the transfer of the carbamoyl group from carbamoyl phosphate (CP) to the N(epsilon) atom of ornithine (ORN) to produce L-citrulline. The sequence is that of Ornithine carbamoyltransferase, catabolic from Thermoplasma volcanium (strain ATCC 51530 / DSM 4299 / JCM 9571 / NBRC 15438 / GSS1).